Consider the following 312-residue polypeptide: Aspartate carbamoyltransferase catalytic subunit (312 aa).

2 residues coordinate carbamoyl phosphate: Arg-55 and Thr-56. Lys-83 lines the L-aspartate pocket. 3 residues coordinate carbamoyl phosphate: Arg-105, His-133, and Gln-136. Arg-166 and Arg-220 together coordinate L-aspartate. Gly-261 and Pro-262 together coordinate carbamoyl phosphate.

Belongs to the aspartate/ornithine carbamoyltransferase superfamily. ATCase family. In terms of assembly, heterododecamer (2C3:3R2) of six catalytic PyrB chains organized as two trimers (C3), and six regulatory PyrI chains organized as three dimers (R2).

It carries out the reaction carbamoyl phosphate + L-aspartate = N-carbamoyl-L-aspartate + phosphate + H(+). Its pathway is pyrimidine metabolism; UMP biosynthesis via de novo pathway; (S)-dihydroorotate from bicarbonate: step 2/3. Its function is as follows. Catalyzes the condensation of carbamoyl phosphate and aspartate to form carbamoyl aspartate and inorganic phosphate, the committed step in the de novo pyrimidine nucleotide biosynthesis pathway. The polypeptide is Aspartate carbamoyltransferase catalytic subunit (Prosthecochloris aestuarii (strain DSM 271 / SK 413)).